The following is a 316-amino-acid chain: Carbamate kinase-like protein YahI (316 aa).

This sequence belongs to the carbamate kinase family.

The polypeptide is Carbamate kinase-like protein YahI (yahI) (Escherichia coli (strain K12)).